The following is a 164-amino-acid chain: Putative pre-16S rRNA nuclease (164 aa).

This sequence belongs to the YqgF nuclease family.

The protein resides in the cytoplasm. Could be a nuclease involved in processing of the 5'-end of pre-16S rRNA. The sequence is that of Putative pre-16S rRNA nuclease from Caulobacter sp. (strain K31).